The chain runs to 456 residues: CBL-interacting protein kinase 9 (456 aa).

A Protein kinase domain is found at 27–282; sequence YELGKTIGEG…IAQILEDDWF (256 aa). Residues 33 to 41 and Lys56 each bind ATP; that span reads IGEGSFAKV. The active-site Proton acceptor is the Asp150. The activation loop stretch occupies residues 168–197; the sequence is DFGLSAFAPQTKEDGLLHTACGTPNYVAPE. Positions 318 to 343 constitute an NAF domain; it reads REKPESMNAFALISRSQGFNLGNLFE. The PPI stretch occupies residues 351–380; the sequence is KRETSFTSQCTPQEIMSKIEEACGPLGFNV.

Belongs to the protein kinase superfamily. CAMK Ser/Thr protein kinase family. SNF1 subfamily. Mn(2+) serves as cofactor.

The enzyme catalyses L-seryl-[protein] + ATP = O-phospho-L-seryl-[protein] + ADP + H(+). It carries out the reaction L-threonyl-[protein] + ATP = O-phospho-L-threonyl-[protein] + ADP + H(+). In terms of biological role, CIPK serine-threonine protein kinases interact with CBL proteins. Binding of a CBL protein to the regulatory NAF domain of CIPK protein lead to the activation of the kinase in a calcium-dependent manner. This Oryza sativa subsp. japonica (Rice) protein is CBL-interacting protein kinase 9 (CIPK9).